Consider the following 554-residue polypeptide: Intraflagellar transport protein 56 (554 aa).

Residues M1–I27 are disordered. Residues D18–I27 are compositionally biased toward basic residues. TPR repeat units lie at residues E57–N90, E92–R125, K151–Y184, and A468–R501.

The protein belongs to the IFT56 family. As to quaternary structure, component of the IFT complex B. Interacts with IFT46; the interaction is direct.

The protein resides in the cell projection. Its subcellular location is the cilium. Its function is as follows. Component of the intraflagellar transport (IFT) complex B required for transport of proteins in the motile cilium. Required for transport of specific ciliary cargo proteins related to motility, while it is neither required for IFT complex B assembly or motion nor for cilium assembly. Required for efficient coupling between the accumulation of GLI2 and GLI3 at the ciliary tips and their dissociation from the negative regulator SUFU. Plays a key role in maintaining the integrity of the IFT complex B and the proper ciliary localization of the IFT complex B components. Not required for IFT complex A ciliary localization or function. Essential for maintaining proper microtubule organization within the ciliary axoneme. The protein is Intraflagellar transport protein 56 of Rattus norvegicus (Rat).